Here is a 481-residue protein sequence, read N- to C-terminus: Deoxyribodipyrimidine photo-lyase (481 aa).

The 136-residue stretch at 1–136 (MQLFWHRRDL…AHAQFHDAVH (136 aa)) folds into the Photolyase/cryptochrome alpha/beta domain. Tyrosine 228 contributes to the FAD binding site. Arginine 232 lines the DNA pocket. 240–244 (TSRLS) is an FAD binding site. Interaction with DNA stretches follow at residues 283–290 (QLAWREFY) and 349–350 (NR). Residue 380–382 (DHD) participates in FAD binding. Glutamine 412 contributes to the DNA binding site.

Belongs to the DNA photolyase class-1 family. In terms of assembly, monomer. FAD is required as a cofactor. Coenzyme F420-(gamma-Glu)n serves as cofactor.

The enzyme catalyses cyclobutadipyrimidine (in DNA) = 2 pyrimidine residues (in DNA).. Functionally, involved in repair of UV radiation-induced DNA damage. Catalyzes the light-dependent monomerization (300-600 nm) of cyclobutyl pyrimidine dimers (in cis-syn configuration), which are formed between adjacent bases on the same DNA strand upon exposure to ultraviolet radiation. This Halobacterium salinarum (strain ATCC 700922 / JCM 11081 / NRC-1) (Halobacterium halobium) protein is Deoxyribodipyrimidine photo-lyase (phr).